A 294-amino-acid chain; its full sequence is N-acetylmuramic acid 6-phosphate etherase (294 aa).

An SIS domain is found at V54 to K217. Residue E82 is the Proton donor of the active site. E113 is an active-site residue.

The protein belongs to the GCKR-like family. MurNAc-6-P etherase subfamily. As to quaternary structure, homodimer.

The enzyme catalyses N-acetyl-D-muramate 6-phosphate + H2O = N-acetyl-D-glucosamine 6-phosphate + (R)-lactate. The protein operates within amino-sugar metabolism; N-acetylmuramate degradation. Its function is as follows. Specifically catalyzes the cleavage of the D-lactyl ether substituent of MurNAc 6-phosphate, producing GlcNAc 6-phosphate and D-lactate. The chain is N-acetylmuramic acid 6-phosphate etherase from Bacillus thuringiensis subsp. konkukian (strain 97-27).